Reading from the N-terminus, the 975-residue chain is MSQTPSSLRDLEHHSAFVERHIGPNDAEIAQMLGVVGHDSLDAMTDAIVPSNIKSPAALALPDAITEEEALARIRAIASKNQVQRTFIGQGYYGTHTPKVILRNILENPAWYTAYTPYQAEISQGRMEALINFQTMCADLTGMQIANASLLDEATAAAEAMTLAKRSAKSKSDTFFVHDAVHPQTQELLRTRAEPLGIVLRVGTPDEAMQAECFGVLLQYPDSFGHIGDHAALADAVHAQGGLVAVATDLLALTLIAAPGEWGADIVVGNSQRFGVPFGFGGPHAAFMACRDAYKRSMPGRLIGVSIDAAGNPAYRLTLQTREQHIRREKATSNICTAQVLLAVMASMYAVYHGPEGLTRIARRTHRLAAILAAALRSAGVTVGEHFFDTLHVKAIDADAIHAKAHAAGINLRAIDSEAVGISLDETSTRADVVALAQLFGAQADIDALDAATADALPQGMRRTSAFLQHPVFNTHHSEHELLRYMRSLADKDLAMDRTMIPLGSCTMKLNATAEMIPVTWPEFGAIHPLAPPEQSAGYAQLIEELEAMLVECTGYDAVSLQPNSGAQGEYAGLLAIRAYHRSRNEAHRDICLIPESAHGTNPASAQMCGMTVVVTKCDANGNVDVDDIRAKAEKYSDRLAALMITYPSTHGVFEEDVVAICEAVHAHGGQVYTDGANMNALVGVAKPGKWGSDVSHLNLHKTFCIPHGGGGPGVGPCAVKSHLAPFLPKTLPNAGIRAGENQKAAIHGSGSNFGEGEVGMVSAASYGSASILPISWMYVTMMGSAGLRKATQVALLNANYIAKRLSAHYKTLYTGRNGLVAHECILDVRPLEKTSGIGAEDIAKRLIDFGFHAPTLSFPVAGTLMVEPTESESQHELDRFIDAMIQIREEIRAIEDGRLDREDNPLKHAPHTATQVSASEWTHAYPRELAAFPLPSLKQQKYWPPVGRVDNVYGDKNVMCACIPVDAYKDDVVA.

Lysine 702 is modified (N6-(pyridoxal phosphate)lysine).

It belongs to the GcvP family. The glycine cleavage system is composed of four proteins: P, T, L and H. Requires pyridoxal 5'-phosphate as cofactor.

The enzyme catalyses N(6)-[(R)-lipoyl]-L-lysyl-[glycine-cleavage complex H protein] + glycine + H(+) = N(6)-[(R)-S(8)-aminomethyldihydrolipoyl]-L-lysyl-[glycine-cleavage complex H protein] + CO2. Its function is as follows. The glycine cleavage system catalyzes the degradation of glycine. The P protein binds the alpha-amino group of glycine through its pyridoxal phosphate cofactor; CO(2) is released and the remaining methylamine moiety is then transferred to the lipoamide cofactor of the H protein. The polypeptide is Glycine dehydrogenase (decarboxylating) (Xanthomonas campestris pv. campestris (strain 8004)).